Reading from the N-terminus, the 212-residue chain is Probable GTP-binding protein EngB (212 aa).

An EngB-type G domain is found at 22-212 (GVSEFAFFGR…NILSLIAKRI (191 aa)). Residues 30–37 (GRSNAGKS), 57–61 (GMTRE), 95–98 (DLPG), 162–165 (TKAD), and 192–195 (ISSA) each bind GTP. Positions 37 and 59 each coordinate Mg(2+).

It belongs to the TRAFAC class TrmE-Era-EngA-EngB-Septin-like GTPase superfamily. EngB GTPase family. The cofactor is Mg(2+).

In terms of biological role, necessary for normal cell division and for the maintenance of normal septation. The protein is Probable GTP-binding protein EngB of Treponema denticola (strain ATCC 35405 / DSM 14222 / CIP 103919 / JCM 8153 / KCTC 15104).